The sequence spans 185 residues: V-type ATP synthase subunit E (185 aa).

Belongs to the V-ATPase E subunit family.

Produces ATP from ADP in the presence of a proton gradient across the membrane. This is V-type ATP synthase subunit E from Deinococcus geothermalis (strain DSM 11300 / CIP 105573 / AG-3a).